Here is a 57-residue protein sequence, read N- to C-terminus: Small ribosomal subunit protein eS31 (57 aa).

Zn(2+) contacts are provided by C29, C32, C47, and C50. A C4-type zinc finger spans residues 29–50; it reads CSRCGKGTYMSEHKDRNTCGKC.

The protein belongs to the eukaryotic ribosomal protein eS31 family. Part of the 30S ribosomal subunit. Zn(2+) serves as cofactor.

The sequence is that of Small ribosomal subunit protein eS31 from Nitrosopumilus maritimus (strain SCM1).